The chain runs to 176 residues: Translation initiation factor IF-3 (176 aa).

Belongs to the IF-3 family. As to quaternary structure, monomer.

It is found in the cytoplasm. Functionally, IF-3 binds to the 30S ribosomal subunit and shifts the equilibrium between 70S ribosomes and their 50S and 30S subunits in favor of the free subunits, thus enhancing the availability of 30S subunits on which protein synthesis initiation begins. The sequence is that of Translation initiation factor IF-3 from Streptococcus agalactiae serotype Ia (strain ATCC 27591 / A909 / CDC SS700).